We begin with the raw amino-acid sequence, 35 residues long: Pheromone-binding protein (35 aa).

The protein belongs to the PBP/GOBP family. In terms of tissue distribution, antenna.

This major soluble protein in olfactory sensilla of male moths might serve to solubilize the extremely hydrophobic pheromone molecules and to transport pheromone through the aqueous lymph to receptors located on olfactory cilia. This is Pheromone-binding protein from Hyalophora cecropia (Cecropia moth).